Here is a 177-residue protein sequence, read N- to C-terminus: Protein BROTHER of FT and TFL 1 (177 aa).

Belongs to the phosphatidylethanolamine-binding protein family.

It is found in the cytoplasm. May form complexes with phosphorylated ligands by interfering with kinases and their effectors. In Arabidopsis thaliana (Mouse-ear cress), this protein is Protein BROTHER of FT and TFL 1 (BFT).